A 348-amino-acid polypeptide reads, in one-letter code: Rhodopsin (348 aa).

At Met1 the chain carries N-acetylmethionine. Residues 1–36 (MNGTEGPNFYVPFSNKTGVVRSPFEYPQYYLAEPWQ) lie on the Extracellular side of the membrane. Residues Asn2 and Asn15 are each glycosylated (N-linked (GlcNAc...) asparagine). Residues 37–61 (FSMLAAYMFLLIVLGFPINFLTLYV) traverse the membrane as a helical segment. Topologically, residues 62-73 (TVQHKKLRTPLN) are cytoplasmic. A helical transmembrane segment spans residues 74–96 (YILLNLAVADLFMVFGGFTTTLY). Over 97-110 (TSLHGYFVFGPTGC) the chain is Extracellular. The cysteines at positions 110 and 187 are disulfide-linked. The chain crosses the membrane as a helical span at residues 111–133 (NLEGFFATLGGEIALWSLVVLAI). The short motif at 134-136 (ERY) is the 'Ionic lock' involved in activated form stabilization element. The Cytoplasmic portion of the chain corresponds to 134–152 (ERYVVVCKPMSNFRFGENH). A helical transmembrane segment spans residues 153–173 (AIMGVGLTWVMALACAAPPLV). Residues 174-202 (GWSRYIPEGMQCSCGIDYYTLKPEVNNES) lie on the Extracellular side of the membrane. Glu201 is a binding site for Zn(2+). The helical transmembrane segment at 203–224 (FVIYMFVVHFTIPMIVIFFCYG) threads the bilayer. Residues 225-252 (QLVFTVKEAAAQQQESATTQKAEKEVTR) are Cytoplasmic-facing. The helical transmembrane segment at 253-274 (MVIIMVIAFLICWVPYASVAFY) threads the bilayer. Over 275–286 (IFTHQGFNFGPI) the chain is Extracellular. Residue Gln279 coordinates Zn(2+). A helical membrane pass occupies residues 287–308 (FMTLPAFFAKAAAIYNPVIYIM). Residue Lys296 is modified to N6-(retinylidene)lysine. At 309–348 (MNKQFRTCMITTLCCGKNPLGDDEVSASASKTETSQVAPA) the chain is on the cytoplasmic side. Residues Cys322 and Cys323 are each lipidated (S-palmitoyl cysteine). Residues 330–348 (DDEVSASASKTETSQVAPA) are interaction with SAG. Phosphoserine is present on residues Ser334 and Ser338. Residues Thr340 and Thr342 each carry the phosphothreonine modification. Ser343 bears the Phosphoserine mark.

Belongs to the G-protein coupled receptor 1 family. Opsin subfamily. In terms of assembly, homodimer. Interacts (phosphorylated form) with SAG. Interacts with GNAT1. Interacts with GNAT3. SAG and G-proteins compete for a common binding site. Interacts with GRK1. Interacts with PRCD; the interaction promotes PRCD stability. Forms a complex with ASAP1 and ARF4. Forms a complex with ASAP1, RAB11A, Rabin8/RAB3IP, ARF4 and RAB11FIP3; the complex regulates Golgi-to-cilia rhodopsin/RHO transport in photoreceptors. In terms of processing, phosphorylated on some or all of the serine and threonine residues present in the C-terminal region. Contains one covalently linked retinal chromophore. Upon light absorption, the covalently bound 11-cis-retinal is converted to all-trans-retinal. After hydrolysis of the Schiff base and release of the covalently bound all-trans-retinal, active rhodopsin is regenerated by binding of a fresh molecule of 11-cis-retinal.

It localises to the membrane. It is found in the cell projection. The protein localises to the cilium. The protein resides in the photoreceptor outer segment. In terms of biological role, photoreceptor required for image-forming vision at low light intensity. Required for photoreceptor cell viability after birth. Light-induced isomerization of 11-cis to all-trans retinal triggers a conformational change that activates signaling via G-proteins. Subsequent receptor phosphorylation mediates displacement of the bound G-protein alpha subunit by the arrestin SAG and terminates signaling. This chain is Rhodopsin (RHO), found in Pagophilus groenlandicus (Harp seal).